The primary structure comprises 252 residues: MVKLLLLNLLASIIFYTSIPLPYIKGLDFQKVARLVPMVGLIIGVILGLLDGGMNYLGMPVLTRSALVVALWIFITGGLHLDGAMDTADGLAVGDPERRLQVMADSATGAFGAMSAIAILLLKTSALTEIGEYRWLVLMAACGWGRWGQQVAIACYPYLKATGKGAFHKQAIRSYKDLLPGLCLMVAVSSLFWLVNNHHLLITVVGLITGSAIASLTAAWFNHKLGGHTGDTYGAVVEWTEALFLCVLTILT.

Helical transmembrane passes span 4–24, 35–55, 65–85, 102–122, 178–198, 201–221, and 232–252; these read LLLL…LPYI, LVPM…GGMN, SALV…DGAM, VMAD…ILLL, LLPG…VNNH, LITV…AAWF, and TYGA…TILT.

It belongs to the CobS family. Mg(2+) serves as cofactor.

Its subcellular location is the cell inner membrane. It carries out the reaction alpha-ribazole + adenosylcob(III)inamide-GDP = adenosylcob(III)alamin + GMP + H(+). It catalyses the reaction alpha-ribazole 5'-phosphate + adenosylcob(III)inamide-GDP = adenosylcob(III)alamin 5'-phosphate + GMP + H(+). The protein operates within cofactor biosynthesis; adenosylcobalamin biosynthesis; adenosylcobalamin from cob(II)yrinate a,c-diamide: step 7/7. Its function is as follows. Joins adenosylcobinamide-GDP and alpha-ribazole to generate adenosylcobalamin (Ado-cobalamin). Also synthesizes adenosylcobalamin 5'-phosphate from adenosylcobinamide-GDP and alpha-ribazole 5'-phosphate. This Trichormus variabilis (strain ATCC 29413 / PCC 7937) (Anabaena variabilis) protein is Adenosylcobinamide-GDP ribazoletransferase.